The chain runs to 105 residues: Small ribosomal subunit protein uS10 (105 aa).

It belongs to the universal ribosomal protein uS10 family. In terms of assembly, part of the 30S ribosomal subunit.

Involved in the binding of tRNA to the ribosomes. This is Small ribosomal subunit protein uS10 from Legionella pneumophila (strain Paris).